Consider the following 206-residue polypeptide: Dual specificity phosphatase 29 (206 aa).

A Tyrosine-protein phosphatase domain is found at 47-194 (HVNQVWPSVY…LRALDITLQE (148 aa)). 138–145 (HCVMGRSR) contacts substrate. The Phosphocysteine intermediate role is filled by Cys139.

It belongs to the protein-tyrosine phosphatase family. Non-receptor class dual specificity subfamily.

The protein resides in the cytoplasm. It is found in the nucleus. The catalysed reaction is O-phospho-L-tyrosyl-[protein] + H2O = L-tyrosyl-[protein] + phosphate. It catalyses the reaction O-phospho-L-seryl-[protein] + H2O = L-seryl-[protein] + phosphate. The enzyme catalyses O-phospho-L-threonyl-[protein] + H2O = L-threonyl-[protein] + phosphate. Its function is as follows. Dual specificity phosphatase able to dephosphorylate phosphotyrosine, phosphoserine and phosphothreonine residues within the same substrate, with a preference for phosphotyrosine as a substrate. Involved in the modulation of AMPK and MAPK1/2 signaling pathways. The protein is Dual specificity phosphatase 29 (dusp29) of Gasterosteus aculeatus (Three-spined stickleback).